Reading from the N-terminus, the 361-residue chain is Palmitoyltransferase ZDHHC2 (361 aa).

Topologically, residues 1-15 are cytoplasmic; the sequence is MAPSGSRSFDCWRVL. Residues 16–36 form a helical membrane-spanning segment; that stretch reads YWIPVLFISLIVAWSYYAYVV. Over 37–50 the chain is Lumenal; that stretch reads QLCIETIENMGEKT. The chain crosses the membrane as a helical span at residues 51 to 71; it reads VYLLIYHLLFLMFVWSYWQTI. Residues 72–167 lie on the Cytoplasmic side of the membrane; the sequence is YSKPMNPLKE…NNCVGFANYK (96 aa). Residues 124-174 enclose the DHHC domain; it reads RYCDRCLLLKPDRCHHCSACDMCILKMDHHCPWVNNCVGFANYKFFMLFLA. The active-site S-palmitoyl cysteine intermediate is the Cys-154. A helical transmembrane segment spans residues 168–188; that stretch reads FFMLFLAYSLLYCLFVTATDM. Residues 189–207 are Lumenal-facing; the sequence is QYFIQFWTNGLPDTQAKFH. The helical transmembrane segment at 208–228 threads the bilayer; the sequence is IMFLFFAASTFSVSLAFLFAY. Residues 229 to 361 lie on the Cytoplasmic side of the membrane; the sequence is HCWLVCKNRS…NPALTIEKET (133 aa). Positions 296–361 are mediates localization to plasma membrane and recycling endosomes; it reads NPDPEQPSIP…NPALTIEKET (66 aa). Over residues 299–308 the composition is skewed to pro residues; the sequence is PEQPSIPPGR. The segment at 299 to 361 is disordered; that stretch reads PEQPSIPPGR…NPALTIEKET (63 aa). The segment covering 331-340 has biased composition (polar residues); that stretch reads SRLLNNGQTD. Positions 333–334 match the Non-canonical dileucine endocytic signal motif; it reads LL. Residues 352 to 355 carry the NPxY-like endocytic signal motif; that stretch reads NPAL.

Belongs to the DHHC palmitoyltransferase family. In terms of assembly, monomer. Homodimer. The monomeric form has a higher catalytic activity. In terms of processing, autopalmitoylated.

The protein resides in the endoplasmic reticulum membrane. It is found in the golgi apparatus membrane. The protein localises to the postsynaptic density. It localises to the postsynaptic recycling endosome membrane. Its subcellular location is the cell membrane. It carries out the reaction L-cysteinyl-[protein] + hexadecanoyl-CoA = S-hexadecanoyl-L-cysteinyl-[protein] + CoA. The enzyme catalyses L-cysteinyl-[protein] + tetradecanoyl-CoA = S-tetradecanoyl-L-cysteinyl-[protein] + CoA. The catalysed reaction is L-cysteinyl-[protein] + octadecanoyl-CoA = S-octadecanoyl-L-cysteinyl-[protein] + CoA. In terms of biological role, palmitoyltransferase that catalyzes the addition of palmitate onto various protein substrates and is involved in a variety of cellular processes. Has no stringent fatty acid selectivity and in addition to palmitate can also transfer onto target proteins myristate from tetradecanoyl-CoA and stearate from octadecanoyl-CoA. The sequence is that of Palmitoyltransferase ZDHHC2 from Danio rerio (Zebrafish).